The primary structure comprises 247 residues: Proteasome subunit alpha type-7-1 (247 aa).

It belongs to the peptidase T1A family. In terms of assembly, the 26S proteasome consists of a 20S proteasome core and two 19S regulatory subunits. The 20S proteasome core is composed of 28 subunits that are arranged in four stacked rings, resulting in a barrel-shaped structure. The two end rings are each formed by seven alpha subunits, and the two central rings are each formed by seven beta subunits. The catalytic chamber with the active sites is on the inside of the barrel.

The protein localises to the cytoplasm. The protein resides in the nucleus. In terms of biological role, the proteasome is a multicatalytic proteinase complex which is characterized by its ability to cleave peptides with Arg, Phe, Tyr, Leu, and Glu adjacent to the leaving group at neutral or slightly basic pH. The proteasome has an ATP-dependent proteolytic activity. The sequence is that of Proteasome subunit alpha type-7-1 (Pros28.1) from Drosophila virilis (Fruit fly).